A 410-amino-acid chain; its full sequence is Zinc finger protein 322 (410 aa).

C2H2-type zinc fingers lie at residues 81–103 (YRCD…QRIH), 109–131 (YKCS…QRTH), 137–159 (YTCD…QRSH), 165–187 (YLCN…RRTH), 193–215 (FKCL…QRTH), 221–243 (YKCN…KRVH), 249–271 (YKCG…QRVH), and 277–299 (YKCL…QATH). Residues 303–325 (FKCLEYEKSFNCSSDFIVHQRIH) form a C2H2-type 9; degenerate zinc finger. The C2H2-type 10; degenerate zinc finger occupies 361 to 383 (YKYSVCDKTFHHSSALLQHQTVH). Residue Ser-400 is modified to Phosphoserine.

This sequence belongs to the krueppel C2H2-type zinc-finger protein family. Interacts with POU5F1.

The protein resides in the nucleus. It localises to the cytoplasm. Transcriptional activator. Important for maintenance of pluripotency in embryonic stem cells. Binds directly to the POU5F1 distal enhancer and the NANOG proximal promoter, and enhances expression of both genes. Can also bind to numerous other gene promoters and regulates expression of many other pluripotency factors, either directly or indirectly. Promotes inhibition of MAPK signaling during embryonic stem cell differentiation. In Mus musculus (Mouse), this protein is Zinc finger protein 322 (Znf322).